A 211-amino-acid polypeptide reads, in one-letter code: Claudin-13 (211 aa).

The Cytoplasmic portion of the chain corresponds to 1-8 (MVVSKQEA). A helical membrane pass occupies residues 9-29 (ISFSVTSLGWVGAIVSCVLPV). Over 30–80 (WRVTFPDDETDPDATIWEGLWHICQVRENRWIQCTLYDTRILVAQDIKVSR) the chain is Extracellular. The chain crosses the membrane as a helical span at residues 81–101 (VFMVICTIGTWLGLLLCVLGD). At 102–118 (WRINCFMNFTIEENLLK) the chain is on the cytoplasmic side. The helical transmembrane segment at 119 to 139 (VAGGMFLSVGLLMLVPLSWVT) threads the bilayer. Residues 140–165 (HNIIHGFFNPLLGFSKKVQMGSSLSL) are Extracellular-facing. The chain crosses the membrane as a helical span at residues 166–186 (AWTSSLLLLLGGILLCVNIPV). The Cytoplasmic portion of the chain corresponds to 187–211 (CRDFPRCIETPSARPSGANNDTLDV).

This sequence belongs to the claudin family.

The protein resides in the cell junction. Its subcellular location is the tight junction. It localises to the cell membrane. Plays a major role in tight junction-specific obliteration of the intercellular space, through calcium-independent cell-adhesion activity. In Mus musculus (Mouse), this protein is Claudin-13 (Cldn13).